A 74-amino-acid polypeptide reads, in one-letter code: Large ribosomal subunit protein bL31 (74 aa).

The Zn(2+) site is built by C17, C19, C38, and C41.

This sequence belongs to the bacterial ribosomal protein bL31 family. Type A subfamily. In terms of assembly, part of the 50S ribosomal subunit. The cofactor is Zn(2+).

In terms of biological role, binds the 23S rRNA. In Gloeobacter violaceus (strain ATCC 29082 / PCC 7421), this protein is Large ribosomal subunit protein bL31.